The sequence spans 510 residues: NAD(P)H-quinone oxidoreductase subunit 2 B, chloroplastic (510 aa).

Helical transmembrane passes span 24–44 (LLLF…GLIL), 57–77 (IPWL…ALLF), 99–119 (IFQF…VEYI), 124–144 (MAIT…MFLC), 150–170 (ITIF…SGYT), 183–203 (YLLM…WLYG), 229–249 (ISIA…PAPF), 295–315 (WHLL…LVAI), 323–343 (MLAY…IVGD), 347–367 (GYAS…GTFA), 395–415 (ALSS…AGFF), 418–438 (LHLF…IGLL), and 484–504 (MIVC…IIAI).

The protein belongs to the complex I subunit 2 family. In terms of assembly, NDH is composed of at least 16 different subunits, 5 of which are encoded in the nucleus.

It localises to the plastid. It is found in the chloroplast thylakoid membrane. It catalyses the reaction a plastoquinone + NADH + (n+1) H(+)(in) = a plastoquinol + NAD(+) + n H(+)(out). The catalysed reaction is a plastoquinone + NADPH + (n+1) H(+)(in) = a plastoquinol + NADP(+) + n H(+)(out). NDH shuttles electrons from NAD(P)H:plastoquinone, via FMN and iron-sulfur (Fe-S) centers, to quinones in the photosynthetic chain and possibly in a chloroplast respiratory chain. The immediate electron acceptor for the enzyme in this species is believed to be plastoquinone. Couples the redox reaction to proton translocation, and thus conserves the redox energy in a proton gradient. The sequence is that of NAD(P)H-quinone oxidoreductase subunit 2 B, chloroplastic from Ceratophyllum demersum (Rigid hornwort).